Consider the following 210-residue polypeptide: ATP-dependent Clp protease proteolytic subunit (210 aa).

The Nucleophile role is filled by Ser-107. The active site involves His-132.

The protein belongs to the peptidase S14 family. Fourteen ClpP subunits assemble into 2 heptameric rings which stack back to back to give a disk-like structure with a central cavity, resembling the structure of eukaryotic proteasomes.

It localises to the cytoplasm. It catalyses the reaction Hydrolysis of proteins to small peptides in the presence of ATP and magnesium. alpha-casein is the usual test substrate. In the absence of ATP, only oligopeptides shorter than five residues are hydrolyzed (such as succinyl-Leu-Tyr-|-NHMec, and Leu-Tyr-Leu-|-Tyr-Trp, in which cleavage of the -Tyr-|-Leu- and -Tyr-|-Trp bonds also occurs).. In terms of biological role, cleaves peptides in various proteins in a process that requires ATP hydrolysis. Has a chymotrypsin-like activity. Plays a major role in the degradation of misfolded proteins. This is ATP-dependent Clp protease proteolytic subunit from Cereibacter sphaeroides (strain ATCC 17025 / ATH 2.4.3) (Rhodobacter sphaeroides).